The sequence spans 76 residues: uncharacterized protein (76 aa).

A helical transmembrane segment spans residues 24-44; the sequence is GAIFLVCYPLYCVVCFVSVLC.

It localises to the membrane. This is an uncharacterized protein from Schizosaccharomyces pombe (strain 972 / ATCC 24843) (Fission yeast).